The following is a 459-amino-acid chain: Putrescine aminotransferase (459 aa).

Residues 150–151 (GT) and Gln274 each bind pyridoxal 5'-phosphate. Position 300 is an N6-(pyridoxal phosphate)lysine (Lys300). Thr332 contacts pyridoxal 5'-phosphate.

Belongs to the class-III pyridoxal-phosphate-dependent aminotransferase family. Putrescine aminotransferase subfamily. It depends on pyridoxal 5'-phosphate as a cofactor.

It carries out the reaction an alkane-alpha,omega-diamine + 2-oxoglutarate = an omega-aminoaldehyde + L-glutamate. The catalysed reaction is putrescine + 2-oxoglutarate = 1-pyrroline + L-glutamate + H2O. The enzyme catalyses cadaverine + 2-oxoglutarate = 5-aminopentanal + L-glutamate. It functions in the pathway amine and polyamine degradation; putrescine degradation; 4-aminobutanal from putrescine (transaminase route): step 1/1. In terms of biological role, catalyzes the aminotransferase reaction from putrescine to 2-oxoglutarate, leading to glutamate and 4-aminobutanal, which spontaneously cyclizes to form 1-pyrroline. This is the first step in one of two pathways for putrescine degradation, where putrescine is converted into 4-aminobutanoate (gamma-aminobutyrate or GABA) via 4-aminobutanal. Also functions as a cadaverine transaminase in a a L-lysine degradation pathway to succinate that proceeds via cadaverine, glutarate and L-2-hydroxyglutarate. This Salmonella heidelberg (strain SL476) protein is Putrescine aminotransferase.